A 496-amino-acid chain; its full sequence is Deoxyribodipyrimidine photo-lyase (496 aa).

Residues 28–160 (GPVVYWMFRD…EVDAHNVVPM (133 aa)) enclose the Photolyase/cryptochrome alpha/beta domain. FAD is bound by residues Y256, 269–273 (LSGLS), 307–315 (ELIVRRELS), and 415–417 (DGR). E307 serves as a coordination point for DNA.

It belongs to the DNA photolyase class-2 family. It depends on FAD as a cofactor. Highly expressed in flowers. Expressed in roots and stems.

It is found in the nucleus. It carries out the reaction cyclobutadipyrimidine (in DNA) = 2 pyrimidine residues (in DNA).. Functionally, involved in repair of UV radiation-induced DNA damage. Catalyzes the light-dependent monomerization (300-600 nm) of cyclobutylpyrimidine dimers (CPDs), which are formed between adjacent bases on the same DNA strand upon exposure to ultraviolet radiation. Required for plant survival in the presence of UV-B light. Not involved in the repair of (6-4) photoproducts. This chain is Deoxyribodipyrimidine photo-lyase (PHR1), found in Arabidopsis thaliana (Mouse-ear cress).